The following is a 446-amino-acid chain: Oxysterols receptor LXR-beta (446 aa).

The segment covering 1 to 28 (MSSPTSSLDTPLPGNGSPQPSTSSTSPT) has biased composition (low complexity). The segment at 1–69 (MSSPTSSLDT…PERKRKKGPA (69 aa)) is disordered. Positions 1–76 (MSSPTSSLDT…GPAPKMLGHE (76 aa)) are transactivation AF-1; required for ligand-independent transactivation function. Positions 75-152 (HELCRVCGDK…AGMREQCVLS (78 aa)) form a DNA-binding region, nuclear receptor. NR C4-type zinc fingers lie at residues 78 to 98 (CRVC…CEGC) and 116 to 140 (CRGS…LRKC). The segment at 160 to 201 (KIQKQQQQQPPPPTEPASGSSARPAASPGTSEASSQGSGEGE) is disordered. A compositionally biased stretch (low complexity) spans 175–196 (PASGSSARPAASPGTSEASSQG). Residues 205–446 (LTAAQELMIQ…LLSEIWDVHE (242 aa)) are transactivation AF-2; required for ligand-dependent transactivation function; mediates interaction with CCAR2. Residues 208 to 446 (AQELMIQQLV…LLSEIWDVHE (239 aa)) form the NR LBD domain. Glycyl lysine isopeptide (Lys-Gly) (interchain with G-Cter in SUMO2) cross-links involve residues Lys395 and Lys433.

Belongs to the nuclear hormone receptor family. NR1 subfamily. In terms of assembly, forms a heterodimer with RXR. Interacts with CCAR2 (via N-terminus) in a ligand-independent manner. Interacts (when sumoylated) with GPS2; interaction with GPS2 onto hepatic acute phase protein promoters prevents N-Cor corepressor complex dissociation. Interacts with ABCA12 and ABCA1; this interaction is required for ABCA1 localization to the cell surface and is necessary for its normal activity and stability. In terms of processing, sumoylated by SUMO2 at Lys-395 and Lys-433 during the hepatic acute phase response, leading to promote interaction with GPS2 and prevent N-Cor corepressor complex dissociation.

The protein localises to the nucleus. Its function is as follows. Nuclear receptor that exhibits a ligand-dependent transcriptional activation activity. Binds preferentially to double-stranded oligonucleotide direct repeats having the consensus half-site sequence 5'-AGGTCA-3' and 4-nt spacing (DR-4). Regulates cholesterol uptake through MYLIP-dependent ubiquitination of LDLR, VLDLR and LRP8; DLDLR and LRP8. Interplays functionally with RORA for the regulation of genes involved in liver metabolism. Induces LPCAT3-dependent phospholipid remodeling in endoplasmic reticulum (ER) membranes of hepatocytes, driving SREBF1 processing and lipogenesis. Via LPCAT3, triggers the incorporation of arachidonate into phosphatidylcholines of ER membranes, increasing membrane dynamics and enabling triacylglycerols transfer to nascent very low-density lipoprotein (VLDL) particles. Via LPCAT3 also counteracts lipid-induced ER stress response and inflammation, likely by modulating SRC kinase membrane compartmentalization and limiting the synthesis of lipid inflammatory mediators. Plays an anti-inflammatory role during the hepatic acute phase response by acting as a corepressor: inhibits the hepatic acute phase response by preventing dissociation of the N-Cor corepressor complex. This Rattus norvegicus (Rat) protein is Oxysterols receptor LXR-beta (Nr1h2).